A 247-amino-acid chain; its full sequence is Histone acetyltransferase MCC1 (247 aa).

Positions 25–198 constitute an N-acetyltransferase domain; sequence IHYRPINPND…DAFLFVYFIN (174 aa).

This sequence belongs to the acetyltransferase family.

The catalysed reaction is L-lysyl-[protein] + acetyl-CoA = N(6)-acetyl-L-lysyl-[protein] + CoA + H(+). Its function is as follows. Histone acetyltransferase that probably regulates acetylation status of histone H3 during meiosis. Histone acetylation may influence recombination and chromosome segregation. This is Histone acetyltransferase MCC1 (MCC1) from Arabidopsis thaliana (Mouse-ear cress).